The chain runs to 225 residues: UPF0758 protein BB3258 (225 aa).

The region spanning 103 to 225 is the MPN domain; sequence ALANPDLVRR…TVSMAAQGHL (123 aa). H174, H176, and D187 together coordinate Zn(2+). The JAMM motif motif lies at 174–187; sequence HNHPGGTAAASAAD.

Belongs to the UPF0758 family.

This is UPF0758 protein BB3258 from Bordetella bronchiseptica (strain ATCC BAA-588 / NCTC 13252 / RB50) (Alcaligenes bronchisepticus).